Reading from the N-terminus, the 458-residue chain is Argininosuccinate lyase (458 aa).

Belongs to the lyase 1 family. Argininosuccinate lyase subfamily.

It is found in the cytoplasm. The enzyme catalyses 2-(N(omega)-L-arginino)succinate = fumarate + L-arginine. It participates in amino-acid biosynthesis; L-arginine biosynthesis; L-arginine from L-ornithine and carbamoyl phosphate: step 3/3. The protein is Argininosuccinate lyase of Geobacter sp. (strain M21).